A 484-amino-acid polypeptide reads, in one-letter code: RxLR effector protein PexRD18 (484 aa).

The N-terminal stretch at 1-20 is a signal peptide; it reads MSHQRILLLLMAAFFAWVSA. The short motif at 55 to 79 is the RxLR-dEER element; that stretch reads RFLRLYDAEVRDTVRGDNDVDREER.

It belongs to the RxLR effector family.

The protein localises to the secreted. Its subcellular location is the host cell membrane. In terms of biological role, effector that enhances P.infestans colonization of Nicotiana benthamiana leaves. The sequence is that of RxLR effector protein PexRD18 from Phytophthora infestans (strain T30-4) (Potato late blight agent).